Here is a 715-residue protein sequence, read N- to C-terminus: DNA ligase (715 aa).

NAD(+)-binding positions include 47–51 (DADYD), 96–97 (SL), and Glu129. The active-site N6-AMP-lysine intermediate is the Lys131. NAD(+)-binding residues include Arg152, Glu189, Lys306, and Lys330. Zn(2+) contacts are provided by Cys435, Cys438, Cys453, and Cys459. The region spanning 637-715 (KRDSAVAGKT…EDEWLALIQG (79 aa)) is the BRCT domain.

This sequence belongs to the NAD-dependent DNA ligase family. LigA subfamily. Requires Mg(2+) as cofactor. The cofactor is Mn(2+).

It catalyses the reaction NAD(+) + (deoxyribonucleotide)n-3'-hydroxyl + 5'-phospho-(deoxyribonucleotide)m = (deoxyribonucleotide)n+m + AMP + beta-nicotinamide D-nucleotide.. DNA ligase that catalyzes the formation of phosphodiester linkages between 5'-phosphoryl and 3'-hydroxyl groups in double-stranded DNA using NAD as a coenzyme and as the energy source for the reaction. It is essential for DNA replication and repair of damaged DNA. This Rhodopseudomonas palustris (strain BisA53) protein is DNA ligase.